The chain runs to 1186 residues: Sericin 1 (1186 aa).

The first 21 residues, 1–21 (MRFVLCCTLIALAALSVKAFG), serve as a signal peptide directing secretion. Polar residues-rich tracts occupy residues 39-48 (AASSESSYLN) and 104-115 (NGGSASAGQSRD). 3 disordered regions span residues 39–119 (AASS…SSLR), 131–494 (AVAA…EDSS), and 518–1157 (GGAT…VNRL). Residues 145–155 (AQQNAQANWNA) are compositionally biased toward low complexity. A compositionally biased stretch (basic and acidic residues) spans 180–198 (SDKDITAASKDDSRADSSR). The segment covering 211-224 (SESAGLSDRSASSS) has biased composition (low complexity). A compositionally biased stretch (polar residues) spans 256–275 (YYNSSPDGSYNAGTRDSSIS). Residues 286–299 (ADKDQIRAANDRSS) are compositionally biased toward basic and acidic residues. Over residues 300 to 312 (SKQLKQSSAQISS) the composition is skewed to low complexity. Positions 321–334 (SKDRQYSNDKRSKS) are enriched in basic and acidic residues. 3 stretches are compositionally biased toward polar residues: residues 356–380 (RQSN…QTSK), 393–409 (AHSS…SSSY), and 416–445 (FSSS…ASRE). 6 stretches are compositionally biased toward low complexity: residues 465 to 491 (ASQS…TLSE), 518 to 537 (GGAT…VSGA), 553 to 698 (SSSS…YGYS), 705 to 1004 (RVSS…YSSS), 1015 to 1075 (SSSN…ASSE), and 1097 to 1145 (SSTT…TSSS). Repeat copies occupy residues 593 to 630 (SSTG…GGSV), 631 to 668 (SSTG…GGSV), 669 to 706 (SSTG…GGRV), 707 to 744 (SSTG…DGSV), 745 to 782 (SSTG…DGSV), 783 to 820 (SSTG…DGSV), 821 to 858 (SSTG…DGSV), 859 to 896 (SSTG…DGSV), 897 to 934 (SSTG…DGSV), 935 to 972 (SSTG…DGSV), and 973 to 1010 (SSTG…DGSV). Positions 1148–1157 (RSHHSGVNRL) are enriched in basic residues.

As to expression, produced exclusively in the middle (MSG) section of silk glands.

Its subcellular location is the secreted. In terms of biological role, provides the silk fibroin thread with a sticky coating. Acts as a cement by sticking silk threads together. The chain is Sericin 1 (ser1) from Bombyx mori (Silk moth).